A 510-amino-acid polypeptide reads, in one-letter code: G-protein coupled receptor dmsr-1 (510 aa).

The Extracellular segment spans residues 1–35 (MEFTECKTTFIHLPDKSFLYDVFVSVYNFYHPIHA). The chain crosses the membrane as a helical span at residues 36-56 (YLSIFLCVLGTIANFCNIVVL). Residues 57-64 (TRRTMRTP) lie on the Cytoplasmic side of the membrane. Residues 65–85 (VNMILTAMASCDTVVLFSNLI) traverse the membrane as a helical segment. Topologically, residues 86-107 (YTTHYSFVAFKFCHPKHWSYSW) are extracellular. Residues 108-128 (ALFLIAHAHLSLVAHSSSVWL) form a helical membrane-spanning segment. The Cytoplasmic segment spans residues 129–155 (SVMLALVRYVTLRSRGNMGGMQVTLRH). The helical transmembrane segment at 156-176 (SYYAVAVTVSLVAVLNAPNFL) threads the bilayer. Residues 177 to 223 (NYKINEQPLNETCTDLDPMFWNSPAYLPGIADIAKANSCLVFRLSYW) lie on the Extracellular side of the membrane. An N-linked (GlcNAc...) asparagine glycan is attached at Asn-186. The chain crosses the membrane as a helical span at residues 224–244 (ISGMVFKVLPCALLSLFVWLL). Topologically, residues 245-307 (LRILREVREN…GERVDRTTHM (63 aa)) are cytoplasmic. A helical transmembrane segment spans residues 308-328 (LLAIVAVMLVTELPQGIMAVL). Residues 329–343 (SGMCSEEFRIYIYNN) are Extracellular-facing. Residues 344–364 (LGDILDLFSLCGSCCSFIIYC) traverse the membrane as a helical segment. Over 365–510 (SMSGQFRNEF…DGIRGHFQNI (146 aa)) the chain is Cytoplasmic. Positions 452 to 510 (GCDSITPCSPMPTSFPSSPLPPIRSGEDESTDETSHLLNSSGPNSTASADGIRGHFQNI) are disordered. Residues 487–499 (HLLNSSGPNSTAS) are compositionally biased toward polar residues.

It belongs to the G-protein coupled receptor 1 family. Expressed in head neurons including the RID neuron and the paired AIY neurons, and in tail neurons including the paired PHA and PHB neurons. Not expressed in AVE and AVA neurons.

The protein localises to the cell membrane. Functionally, G-protein coupled receptor. Its function is as follows. G-protein coupled receptor for flp-13 RFamide neuropeptides in vitro. Upon activation by flp-13 RFamide neuropeptides, promotes sleep in response to cellular stress also known as stress-induced sleep (SIS), probably by inhibiting the activity of wake-promoting neurons. This Caenorhabditis elegans protein is G-protein coupled receptor dmsr-1.